We begin with the raw amino-acid sequence, 98 residues long: NADH-ubiquinone oxidoreductase chain 4L (98 aa).

The next 3 membrane-spanning stretches (helical) occupy residues 1–21, 30–50, and 61–81; these read MSPI…GLLI, LLCL…LALT, and IILL…LVMV.

The protein belongs to the complex I subunit 4L family. As to quaternary structure, core subunit of respiratory chain NADH dehydrogenase (Complex I) which is composed of 45 different subunits.

The protein localises to the mitochondrion inner membrane. It catalyses the reaction a ubiquinone + NADH + 5 H(+)(in) = a ubiquinol + NAD(+) + 4 H(+)(out). In terms of biological role, core subunit of the mitochondrial membrane respiratory chain NADH dehydrogenase (Complex I) which catalyzes electron transfer from NADH through the respiratory chain, using ubiquinone as an electron acceptor. Part of the enzyme membrane arm which is embedded in the lipid bilayer and involved in proton translocation. The protein is NADH-ubiquinone oxidoreductase chain 4L (MT-ND4L) of Chrysochloris asiatica (Cape golden mole).